The primary structure comprises 52 residues: Conotoxin Cal9.2b (52 aa).

A propeptide spanning residues 1–6 (KKGVTL) is cleaved from the precursor. 3 disulfide bridges follow: C14-C31, C19-C41, and C21-C46.

As to expression, expressed by the venom duct.

The protein localises to the secreted. Probable neurotoxin with unknown target. Possibly targets ion channels. The sequence is that of Conotoxin Cal9.2b from Californiconus californicus (California cone).